The chain runs to 354 residues: Uroporphyrinogen decarboxylase (354 aa).

Substrate contacts are provided by residues 27 to 31 (RQAGR), aspartate 77, tyrosine 154, threonine 209, and histidine 327.

Belongs to the uroporphyrinogen decarboxylase family. In terms of assembly, homodimer.

Its subcellular location is the cytoplasm. It carries out the reaction uroporphyrinogen III + 4 H(+) = coproporphyrinogen III + 4 CO2. The protein operates within porphyrin-containing compound metabolism; protoporphyrin-IX biosynthesis; coproporphyrinogen-III from 5-aminolevulinate: step 4/4. In terms of biological role, catalyzes the decarboxylation of four acetate groups of uroporphyrinogen-III to yield coproporphyrinogen-III. In Histophilus somni (strain 129Pt) (Haemophilus somnus), this protein is Uroporphyrinogen decarboxylase.